The following is a 272-amino-acid chain: Dermonecrotic toxin LspaSicTox-alphaII1 (272 aa).

His5 is a catalytic residue. Mg(2+)-binding residues include Glu25 and Asp27. His41 functions as the Nucleophile in the catalytic mechanism. 2 disulfides stabilise this stretch: Cys45/Cys51 and Cys47/Cys190. Asp85 is a binding site for Mg(2+).

Belongs to the arthropod phospholipase D family. Class II subfamily. It depends on Mg(2+) as a cofactor. As to expression, expressed by the venom gland.

The protein localises to the secreted. The enzyme catalyses an N-(acyl)-sphingosylphosphocholine = an N-(acyl)-sphingosyl-1,3-cyclic phosphate + choline. It catalyses the reaction an N-(acyl)-sphingosylphosphoethanolamine = an N-(acyl)-sphingosyl-1,3-cyclic phosphate + ethanolamine. It carries out the reaction a 1-acyl-sn-glycero-3-phosphocholine = a 1-acyl-sn-glycero-2,3-cyclic phosphate + choline. The catalysed reaction is a 1-acyl-sn-glycero-3-phosphoethanolamine = a 1-acyl-sn-glycero-2,3-cyclic phosphate + ethanolamine. Its function is as follows. Dermonecrotic toxins cleave the phosphodiester linkage between the phosphate and headgroup of certain phospholipids (sphingolipid and lysolipid substrates), forming an alcohol (often choline) and a cyclic phosphate. This toxin acts on sphingomyelin (SM). It may also act on ceramide phosphoethanolamine (CPE), lysophosphatidylcholine (LPC) and lysophosphatidylethanolamine (LPE), but not on lysophosphatidylserine (LPS), and lysophosphatidylglycerol (LPG). It acts by transphosphatidylation, releasing exclusively cyclic phosphate products as second products. Induces dermonecrosis, hemolysis, increased vascular permeability, edema, inflammatory response, and platelet aggregation. This chain is Dermonecrotic toxin LspaSicTox-alphaII1, found in Loxosceles spadicea (Recluse spider).